Consider the following 321-residue polypeptide: TAVTDIVPDVVVAKDGSGNFTTVGAAVAAAKDSSTARFVIYIKEGAYFEYVDVDKKKTNLMFIGDGIGKTWIKGNRSVVDGWTTFRSSTVAVVGTGFIARGISFENYAGPSKHQAVALRSGADFSAFYQCSFVGYQDTLYVHSLRQFYSECDVYGTIDFIFGNAAAVLQKCNLYARKPNENQKNIFTAQGRDDPNQNTGISILNCKVAAAADLIPVLSSFKTYLGRPWKEYSRTVFLLSQMESLIDPAGWLEWSGDFALTTLYYREYKNTGPGSNTTARVTWPGYAVTTNETEVIQFTVGNFIQGSQWLTSYNIPVYLNLT.

The residue at position 1 (Thr-1) is an N-acetylthreonine. Residue Asn-75 is glycosylated (N-linked (GlcNAc...) (complex) asparagine). Positions 84 and 114 each coordinate substrate. Residue Asp-137 is the Proton donor of the active site. The cysteines at positions 151 and 171 are disulfide-linked. The Nucleophile role is filled by Asp-158. Substrate is bound by residues Arg-226 and Trp-228. 3 N-linked (GlcNAc...) (complex) asparagine glycosylation sites follow: Asn-275, Asn-290, and Asn-319.

The protein belongs to the pectinesterase family. In terms of processing, the N-glycans attached at Asn-75, Asn-275, Asn-290 and Asn-319 are complex oligosaccharides containing xylose, fucose, hexose and N-acetylglucosamine.

It catalyses the reaction [(1-&gt;4)-alpha-D-galacturonosyl methyl ester](n) + n H2O = [(1-&gt;4)-alpha-D-galacturonosyl](n) + n methanol + n H(+). It functions in the pathway glycan metabolism; pectin degradation; 2-dehydro-3-deoxy-D-gluconate from pectin: step 1/5. Inhibited by PMEI. This is Pectinesterase from Actinidia deliciosa (Kiwi).